We begin with the raw amino-acid sequence, 621 residues long: Chaperone protein HtpG (621 aa).

Residues 1 to 341 (MSNQEYTFQT…SEDLPLNVSR (341 aa)) are a; substrate-binding. The tract at residues 342–547 (EILQQNKILA…GDEPNAMMAN (206 aa)) is b. The c stretch occupies residues 548-621 (WMRQMGQSVP…RLNSVLLKAL (74 aa)).

It belongs to the heat shock protein 90 family. As to quaternary structure, homodimer.

The protein localises to the cytoplasm. Functionally, molecular chaperone. Has ATPase activity. This chain is Chaperone protein HtpG, found in Helicobacter pylori (strain J99 / ATCC 700824) (Campylobacter pylori J99).